The sequence spans 104 residues: Large ribosomal subunit protein uL24 (104 aa).

It belongs to the universal ribosomal protein uL24 family. In terms of assembly, part of the 50S ribosomal subunit.

Functionally, one of two assembly initiator proteins, it binds directly to the 5'-end of the 23S rRNA, where it nucleates assembly of the 50S subunit. Its function is as follows. One of the proteins that surrounds the polypeptide exit tunnel on the outside of the subunit. The polypeptide is Large ribosomal subunit protein uL24 (Pseudomonas fluorescens (strain ATCC BAA-477 / NRRL B-23932 / Pf-5)).